The following is a 253-amino-acid chain: Hydroxyacylglutathione hydrolase (253 aa).

Residues His-59, His-61, Asp-63, His-64, His-118, Asp-143, and His-181 each contribute to the Zn(2+) site.

Belongs to the metallo-beta-lactamase superfamily. Glyoxalase II family. Monomer. Requires Zn(2+) as cofactor.

It catalyses the reaction an S-(2-hydroxyacyl)glutathione + H2O = a 2-hydroxy carboxylate + glutathione + H(+). It participates in secondary metabolite metabolism; methylglyoxal degradation; (R)-lactate from methylglyoxal: step 2/2. Thiolesterase that catalyzes the hydrolysis of S-D-lactoyl-glutathione to form glutathione and D-lactic acid. The chain is Hydroxyacylglutathione hydrolase from Prochlorococcus marinus (strain SARG / CCMP1375 / SS120).